The primary structure comprises 402 residues: Flavohemoprotein (402 aa).

One can recognise a Globin domain in the interval 1–136 (MLSEKTIEIV…IADAFISIEA (136 aa)). His85 contributes to the heme b binding site. Catalysis depends on charge relay system residues Tyr95 and Glu135. Residues 147-402 (GGWKDFRNFV…EFFGPAASLQ (256 aa)) are reductase. The FAD-binding FR-type domain maps to 150 to 260 (KDFRNFVVVK…SAPAGDFVLN (111 aa)). FAD contacts are provided by residues Tyr188 and 204–207 (RQYS). An NADP(+)-binding site is contributed by 273 to 278 (GVGITP). Position 394–397 (394–397 (FFGP)) interacts with FAD.

It belongs to the globin family. Two-domain flavohemoproteins subfamily. In the C-terminal section; belongs to the flavoprotein pyridine nucleotide cytochrome reductase family. Heme b serves as cofactor. Requires FAD as cofactor.

The enzyme catalyses 2 nitric oxide + NADPH + 2 O2 = 2 nitrate + NADP(+) + H(+). The catalysed reaction is 2 nitric oxide + NADH + 2 O2 = 2 nitrate + NAD(+) + H(+). Functionally, is involved in NO detoxification in an aerobic process, termed nitric oxide dioxygenase (NOD) reaction that utilizes O(2) and NAD(P)H to convert NO to nitrate, which protects the bacterium from various noxious nitrogen compounds. Therefore, plays a central role in the inducible response to nitrosative stress. The sequence is that of Flavohemoprotein from Bacillus cereus (strain ATCC 10987 / NRS 248).